The chain runs to 689 residues: Elongation factor G (689 aa).

The tr-type G domain maps to 8–282 (LNTRNIGIMA…AVVDYLPSPI (275 aa)). GTP-binding positions include 17 to 24 (AHIDAGKT), 81 to 85 (DTPGH), and 135 to 138 (NKMD).

The protein belongs to the TRAFAC class translation factor GTPase superfamily. Classic translation factor GTPase family. EF-G/EF-2 subfamily.

Its subcellular location is the cytoplasm. Its function is as follows. Catalyzes the GTP-dependent ribosomal translocation step during translation elongation. During this step, the ribosome changes from the pre-translocational (PRE) to the post-translocational (POST) state as the newly formed A-site-bound peptidyl-tRNA and P-site-bound deacylated tRNA move to the P and E sites, respectively. Catalyzes the coordinated movement of the two tRNA molecules, the mRNA and conformational changes in the ribosome. The chain is Elongation factor G from Mycoplasma capricolum subsp. capricolum (strain California kid / ATCC 27343 / NCTC 10154).